A 233-amino-acid chain; its full sequence is Cytidylate kinase (233 aa).

15–23 (GPSGAGKSS) is a binding site for ATP. The segment covering 183-200 (QRDRQDEGREHAPLKQAE) has biased composition (basic and acidic residues). Residues 183–203 (QRDRQDEGREHAPLKQAEDAV) form a disordered region.

The protein belongs to the cytidylate kinase family. Type 1 subfamily.

Its subcellular location is the cytoplasm. The catalysed reaction is CMP + ATP = CDP + ADP. It carries out the reaction dCMP + ATP = dCDP + ADP. The protein is Cytidylate kinase of Geobacter sp. (strain M21).